The primary structure comprises 190 residues: Large ribosomal subunit protein bL25 (190 aa).

The segment at 1–20 (MSEQKTLSVQKRDNLGKGAN) is disordered.

The protein belongs to the bacterial ribosomal protein bL25 family. CTC subfamily. In terms of assembly, part of the 50S ribosomal subunit; part of the 5S rRNA/L5/L18/L25 subcomplex. Contacts the 5S rRNA. Binds to the 5S rRNA independently of L5 and L18.

Functionally, this is one of the proteins that binds to the 5S RNA in the ribosome where it forms part of the central protuberance. The protein is Large ribosomal subunit protein bL25 of Nitratidesulfovibrio vulgaris (strain ATCC 29579 / DSM 644 / CCUG 34227 / NCIMB 8303 / VKM B-1760 / Hildenborough) (Desulfovibrio vulgaris).